The chain runs to 491 residues: MALLRVLCLLAALRRSLCTDTEERLVEYLLDPTRYNKLIRPATNGSQLVTVQLMVSLAQLISVHEREQIMTTNVWLTQEWEDYRLTWKPEDFDNMKKVRLPSKHIWLPDVVLYNNADGMYEVSFYSNAVISYDGSIFWLPPAIYKSACKIEVKHFPFDQQNCTMKFRSWTYDRTEIDLVLKSEVASLDDFTPSGEWDIVALPGRRNENPDDSTYVDITYDFIIRRKPLFYTINLIIPCILITSLAILVFYLPSDCGEKMTLCISVLLALTVFLLLISKIVPPTSLDVPLVGKYLMFTMVLVTFSIVTSVCVLNVHHRSPTTHTMPPWVRTLFLRKLPALLFMKQPQQNCARQRLRQRRQTQERAAAATLFLRAGARACACYANPGAAKAEGLNGYRERQGQGPDPPAPCGCGLEEAVEGVRFIADHMRSEDDDQSVSEDWKYVAMVIDRLFLWIFVFVCVFGTVGMFLQPLFQNYATNSLLQLGQGTPTSK.

An N-terminal signal peptide occupies residues 1–18; sequence MALLRVLCLLAALRRSLC. Residues 19–226 are Extracellular-facing; the sequence is TDTEERLVEY…ITYDFIIRRK (208 aa). Asn44 and Asn161 each carry an N-linked (GlcNAc...) asparagine glycan. Cysteines 148 and 162 form a disulfide. A helical transmembrane segment spans residues 227–251; that stretch reads PLFYTINLIIPCILITSLAILVFYL. Over 252 to 258 the chain is Cytoplasmic; it reads PSDCGEK. The helical transmembrane segment at 259 to 277 threads the bilayer; sequence MTLCISVLLALTVFLLLIS. At 278–292 the chain is on the extracellular side; sequence KIVPPTSLDVPLVGK. Residues 293–314 traverse the membrane as a helical segment; the sequence is YLMFTMVLVTFSIVTSVCVLNV. The Cytoplasmic segment spans residues 315 to 449; the sequence is HHRSPTTHTM…WKYVAMVIDR (135 aa). The chain crosses the membrane as a helical span at residues 450-468; it reads LFLWIFVFVCVFGTVGMFL.

It belongs to the ligand-gated ion channel (TC 1.A.9) family. Acetylcholine receptor (TC 1.A.9.1) subfamily. Beta-2/CHRNB2 sub-subfamily. In terms of assembly, neuronal AChR is a heteropentamer composed of two different types of subunits: alpha and beta. CHRNB2/Beta-2 subunit can be combined to CHRNA2/alpha-2, CHRNA3/alpha-3 or CHRNA4/alpha-4, CHRNA5/alpha-5, CHRNA6/alpha-6 and CHRNB3/beta-3 to give rise to functional receptors.

The protein localises to the synaptic cell membrane. It localises to the cell membrane. The catalysed reaction is Ca(2+)(in) = Ca(2+)(out). It carries out the reaction K(+)(in) = K(+)(out). The enzyme catalyses Na(+)(in) = Na(+)(out). Its activity is regulated as follows. Activated by a myriad of ligands such as acetylcholine, cytisine, nicotine, choline and epibatidine. nAChR activity is inhibited by the antagonist alpha-conotoxins BuIA, PnIA, PnIC, GID and MII, small disulfide-constrained peptides from cone snails. Component of neuronal acetylcholine receptors (nAChRs) that function as pentameric, ligand-gated cation channels with high calcium permeability among other activities. nAChRs are excitatory neurotrasnmitter receptors formed by a collection of nAChR subunits known to mediate synaptic transmission in the nervous system and the neuromuscular junction. Each nAchR subunit confers differential attributes to channel properties, including activation, deactivation and desensitization kinetics, pH sensitivity, cation permeability, and binding to allosteric modulators. CHRNB2 forms heteropentameric neuronal acetylcholine receptors with CHRNA2, CHRNA3, CHRNA4 and CHRNA6, as well as CHRNA5 and CHRNB3 as accesory subunits. The protein is Neuronal acetylcholine receptor subunit beta-2 (CHRNB2) of Gallus gallus (Chicken).